A 118-amino-acid chain; its full sequence is Large ribosomal subunit protein bL20 (118 aa).

This sequence belongs to the bacterial ribosomal protein bL20 family.

Binds directly to 23S ribosomal RNA and is necessary for the in vitro assembly process of the 50S ribosomal subunit. It is not involved in the protein synthesizing functions of that subunit. The chain is Large ribosomal subunit protein bL20 from Macrococcus caseolyticus (strain JCSC5402) (Macrococcoides caseolyticum).